We begin with the raw amino-acid sequence, 325 residues long: G-protein coupled receptor E6 (325 aa).

A run of 7 helical transmembrane segments spans residues 45-65, 71-91, 106-126, 145-165, 198-218, 233-253, and 274-294; these read LFGT…MGFF, FTPS…LWLM, IVTE…NVGM, PAAI…VIAV, LVAK…GTAL, AICV…LTAM, and VFIY…MFTG.

This sequence belongs to the G-protein coupled receptor 1 family.

The protein localises to the host membrane. This is G-protein coupled receptor E6 (E6) from Equus caballus (Horse).